Here is a 368-residue protein sequence, read N- to C-terminus: Phospho-N-acetylmuramoyl-pentapeptide-transferase (368 aa).

9 helical membrane-spanning segments follow: residues 2–22 (IALI…TPLL), 51–71 (TLGG…SALY), 80–100 (PSWS…LGFI), 117–137 (GGKF…ALLI), 167–187 (VAII…TNAV), 193–213 (LDGL…IIAF), 234–254 (PLDL…FLWY), 271–291 (LGGL…AVVL), and 340–360 (FWMI…GDWV).

It belongs to the glycosyltransferase 4 family. MraY subfamily. Requires Mg(2+) as cofactor.

It is found in the cell membrane. It carries out the reaction UDP-N-acetyl-alpha-D-muramoyl-L-alanyl-gamma-D-glutamyl-meso-2,6-diaminopimeloyl-D-alanyl-D-alanine + di-trans,octa-cis-undecaprenyl phosphate = di-trans,octa-cis-undecaprenyl diphospho-N-acetyl-alpha-D-muramoyl-L-alanyl-D-glutamyl-meso-2,6-diaminopimeloyl-D-alanyl-D-alanine + UMP. The protein operates within cell wall biogenesis; peptidoglycan biosynthesis. Its function is as follows. Catalyzes the initial step of the lipid cycle reactions in the biosynthesis of the cell wall peptidoglycan: transfers peptidoglycan precursor phospho-MurNAc-pentapeptide from UDP-MurNAc-pentapeptide onto the lipid carrier undecaprenyl phosphate, yielding undecaprenyl-pyrophosphoryl-MurNAc-pentapeptide, known as lipid I. This Bifidobacterium longum (strain DJO10A) protein is Phospho-N-acetylmuramoyl-pentapeptide-transferase.